Here is a 389-residue protein sequence, read N- to C-terminus: S-adenosylmethionine synthase (389 aa).

Histidine 16 is a binding site for ATP. Aspartate 18 is a binding site for Mg(2+). Glutamate 44 provides a ligand contact to K(+). The L-methionine site is built by glutamate 57 and glutamine 100. The tract at residues glutamine 100–glutamate 110 is flexible loop. ATP contacts are provided by residues aspartate 167 to lysine 169, arginine 233 to phenylalanine 234, aspartate 242, arginine 248 to lysine 249, alanine 265, and lysine 269. Aspartate 242 lines the L-methionine pocket. Lysine 273 lines the L-methionine pocket.

Belongs to the AdoMet synthase family. In terms of assembly, homotetramer; dimer of dimers. It depends on Mg(2+) as a cofactor. The cofactor is K(+).

The protein localises to the cytoplasm. The catalysed reaction is L-methionine + ATP + H2O = S-adenosyl-L-methionine + phosphate + diphosphate. It participates in amino-acid biosynthesis; S-adenosyl-L-methionine biosynthesis; S-adenosyl-L-methionine from L-methionine: step 1/1. Functionally, catalyzes the formation of S-adenosylmethionine (AdoMet) from methionine and ATP. The overall synthetic reaction is composed of two sequential steps, AdoMet formation and the subsequent tripolyphosphate hydrolysis which occurs prior to release of AdoMet from the enzyme. The sequence is that of S-adenosylmethionine synthase from Acidithiobacillus ferrooxidans (strain ATCC 23270 / DSM 14882 / CIP 104768 / NCIMB 8455) (Ferrobacillus ferrooxidans (strain ATCC 23270)).